A 296-amino-acid polypeptide reads, in one-letter code: NH(3)-dependent NAD(+) synthetase (296 aa).

30–37 (GVSGGLDS) contacts ATP. Mg(2+) is bound at residue Asp36. Deamido-NAD(+) is bound at residue Arg157. Glu182 contributes to the Mg(2+) binding site. Positions 190 and 197 each coordinate deamido-NAD(+). 2 residues coordinate ATP: Lys206 and Ser228.

The protein belongs to the NAD synthetase family. In terms of assembly, homodimer.

The catalysed reaction is deamido-NAD(+) + NH4(+) + ATP = AMP + diphosphate + NAD(+) + H(+). It participates in cofactor biosynthesis; NAD(+) biosynthesis; NAD(+) from deamido-NAD(+) (ammonia route): step 1/1. In terms of biological role, catalyzes the ATP-dependent amidation of deamido-NAD to form NAD. Uses ammonia as a nitrogen source. The polypeptide is NH(3)-dependent NAD(+) synthetase (Coprothermobacter proteolyticus (strain ATCC 35245 / DSM 5265 / OCM 4 / BT)).